Here is a 101-residue protein sequence, read N- to C-terminus: NADH-quinone oxidoreductase subunit K (101 aa).

3 helical membrane passes run 5 to 25 (LTHY…GIIL), 30 to 50 (IVIL…LVAF), and 61 to 81 (VLVF…LALI).

It belongs to the complex I subunit 4L family. In terms of assembly, NDH-1 is composed of 14 different subunits. Subunits NuoA, H, J, K, L, M, N constitute the membrane sector of the complex.

The protein localises to the cell inner membrane. The catalysed reaction is a quinone + NADH + 5 H(+)(in) = a quinol + NAD(+) + 4 H(+)(out). Its function is as follows. NDH-1 shuttles electrons from NADH, via FMN and iron-sulfur (Fe-S) centers, to quinones in the respiratory chain. The immediate electron acceptor for the enzyme in this species is believed to be ubiquinone. Couples the redox reaction to proton translocation (for every two electrons transferred, four hydrogen ions are translocated across the cytoplasmic membrane), and thus conserves the redox energy in a proton gradient. This chain is NADH-quinone oxidoreductase subunit K, found in Methylacidiphilum infernorum (isolate V4) (Methylokorus infernorum (strain V4)).